We begin with the raw amino-acid sequence, 334 residues long: MHVIAVDAMGGDNAPQAIVEGVNQALAEFKDIEIQLYGDEAKIKNYLTANERVSIVHTDEKINSDDEPVKAIRKKKKASMVLGAQAVKEKAADAVISAGNTGALLAAGLFVVGRIKGVERPGLMSTMPSFTGQPFDMLDLGANAENTANHLHQYAILGSFYAKNVRGIATPRVGLLNNGTEKTKGDSLRKEAFELLSKEASINFIGNVEAREIMSGAADVVVADGFTGNAVLKAIEGTGLGTMKTLKSAIMNGGLKAKLGAFLLKDRLKGMKETMDYSSAGGAVLFGLKAPVVKCHGSSDAKAVYYTIKQVRKMLDTKVVEQLVDAFDPKEEVN.

Belongs to the PlsX family. As to quaternary structure, homodimer. Probably interacts with PlsY.

It localises to the cytoplasm. The catalysed reaction is a fatty acyl-[ACP] + phosphate = an acyl phosphate + holo-[ACP]. It functions in the pathway lipid metabolism; phospholipid metabolism. Functionally, catalyzes the reversible formation of acyl-phosphate (acyl-PO(4)) from acyl-[acyl-carrier-protein] (acyl-ACP). This enzyme utilizes acyl-ACP as fatty acyl donor, but not acyl-CoA. The polypeptide is Phosphate acyltransferase (Streptococcus thermophilus (strain ATCC BAA-491 / LMD-9)).